The primary structure comprises 317 residues: tRNA dimethylallyltransferase (317 aa).

Residue 14 to 21 (GPTAVGKT) participates in ATP binding. 16-21 (TAVGKT) lines the substrate pocket. Positions 39-42 (DSMQ) are interaction with substrate tRNA.

This sequence belongs to the IPP transferase family. Monomer. Requires Mg(2+) as cofactor.

It catalyses the reaction adenosine(37) in tRNA + dimethylallyl diphosphate = N(6)-dimethylallyladenosine(37) in tRNA + diphosphate. In terms of biological role, catalyzes the transfer of a dimethylallyl group onto the adenine at position 37 in tRNAs that read codons beginning with uridine, leading to the formation of N6-(dimethylallyl)adenosine (i(6)A). This Bacillus cereus (strain ATCC 14579 / DSM 31 / CCUG 7414 / JCM 2152 / NBRC 15305 / NCIMB 9373 / NCTC 2599 / NRRL B-3711) protein is tRNA dimethylallyltransferase.